A 260-amino-acid chain; its full sequence is Snake venom serine protease salmobin (260 aa).

A signal peptide spans 1-18 (MVLIKVLANHLILQLSYA). Positions 19 to 24 (QKSSEL) are excised as a propeptide. The region spanning 25-251 (VIGGDECNIN…YTDWIQSIIA (227 aa)) is the Peptidase S1 domain. Disulfide bonds link Cys31-Cys165, Cys52-Cys68, Cys102-Cys258, Cys144-Cys212, Cys176-Cys191, and Cys202-Cys227. The active-site Charge relay system is the His67. The N-linked (GlcNAc...) asparagine glycan is linked to Asn105. The active-site Charge relay system is Asp112. Residues Asn123 and Asn156 are each glycosylated (N-linked (GlcNAc...) asparagine). The active-site Charge relay system is Ser206.

It belongs to the peptidase S1 family. Snake venom subfamily. In terms of assembly, monomer. As to expression, expressed by the venom gland.

It localises to the secreted. Its function is as follows. Snake venom serine protease that may act in the hemostasis system of the prey. This chain is Snake venom serine protease salmobin, found in Gloydius halys (Chinese water mocassin).